Reading from the N-terminus, the 269-residue chain is Regulatory protein RecX (269 aa).

This sequence belongs to the RecX family.

It is found in the cytoplasm. In terms of biological role, modulates RecA activity. In Listeria welshimeri serovar 6b (strain ATCC 35897 / DSM 20650 / CCUG 15529 / CIP 8149 / NCTC 11857 / SLCC 5334 / V8), this protein is Regulatory protein RecX.